A 135-amino-acid chain; its full sequence is Basic phospholipase A2 6 (135 aa).

Disulfide bonds link C28-C87, C42-C134, C44-C60, C59-C115, C66-C108, C76-C101, and C94-C106. The Ca(2+) site is built by Y43, G45, and G47. Residue H63 is part of the active site. D64 is a Ca(2+) binding site. D109 is a catalytic residue.

This sequence belongs to the phospholipase A2 family. Group I subfamily. D49 sub-subfamily. The cofactor is Ca(2+). Expressed by the venom gland.

The protein localises to the secreted. It carries out the reaction a 1,2-diacyl-sn-glycero-3-phosphocholine + H2O = a 1-acyl-sn-glycero-3-phosphocholine + a fatty acid + H(+). In terms of biological role, snake venom phospholipase A2 (PLA2) that inhibits neuromuscular transmission by blocking acetylcholine release from the nerve termini. PLA2 catalyzes the calcium-dependent hydrolysis of the 2-acyl groups in 3-sn-phosphoglycerides. Very weakly suppress the acetylcholine (ACh)-evoked current mediated by alpha-7-similar nAChRs in L.stagnalis neurons. The chain is Basic phospholipase A2 6 from Bungarus fasciatus (Banded krait).